The sequence spans 609 residues: Protein alan shepard (609 aa).

The span at 1 to 12 (MHPRYSPAPPPL) shows a compositional bias: pro residues. Residues 1–96 (MHPRYSPAPP…ASVAAAPPTP (96 aa)) form a disordered region. A Phosphotyrosine modification is found at Tyr5. Positions 13 to 35 (HQQQQQQPPQQQQQQMGGPHQQQ) are enriched in low complexity. Residues 37–50 (GGVGPGTGHGGVGA) are compositionally biased toward gly residues. Low complexity-rich tracts occupy residues 51–68 (AVGASNAGHMRAPPNSQQ) and 83–92 (SSSAASVAAA). Phosphotyrosine is present on residues Tyr152 and Tyr168. Residues 190 to 252 (PATTTYGQRV…AQNQNQQGGE (63 aa)) form a disordered region. Low complexity predominate over residues 204-252 (SPSNTNSSSSSNTGSQSGTLSTSLSNTTNTNTTMGPNGTAQNQNQQGGE). 2 consecutive RRM domains span residues 257 to 330 (TNLY…MAKQ) and 336 to 415 (TNLY…FADG). The interval 583–609 (MTDSEQASTAASPDEAYTQYPHQAAPK) is disordered.

Functionally, has a role in the perception of gravity. The sequence is that of Protein alan shepard from Drosophila grimshawi (Hawaiian fruit fly).